The chain runs to 254 residues: uncharacterized protein (254 aa).

8 helical membrane passes run 41-61, 64-84, 91-111, 125-145, 146-166, 172-192, 204-224, and 232-252; these read LFVF…IKII, ILQA…EYFF, IYCG…LYIL, LLIS…FVLA, PAAL…LWSF, FILL…IQLL, MIRA…ILTP, and LIMS…LLVL.

This sequence belongs to the TatC family.

The protein localises to the plastid. It is found in the chloroplast membrane. This is an uncharacterized protein from Pyropia yezoensis (Susabi-nori).